Reading from the N-terminus, the 355-residue chain is MYYDDGIPVFDSLDKLTKPNSMKVVSSDSSEKGDIVLEPLESGFALTLGNALRRVMLSSLIGSAVYGIKIDGITHEFTSIQGVREDVTDIVLNMGMLRCKLNGTSNKCLSLSAKGPCQVLAGMIETDDQCSIVNKDLLICTLGQDVELNMTIYVASGKGYLPVTKYKENEFLKPMNEQDLISFIPVNALYSPINRVSYRVENSRVGQVTDKDKLILSVETDGTISPSQAVDSAARILQEQLQPFISSDISYKKSQVSSPSGYKDLGYDPILLRKVDEMELSVRSHNCLKNENITYIGDLVQKTESEMLRTANFGRKSLNEIKAVLNNFGLSLGMDIPDWPPKDIDELARQHTDED.

Residues 1–248 (MYYDDGIPVF…EQLQPFISSD (248 aa)) form an alpha N-terminal domain (alpha-NTD) region. An alpha C-terminal domain (alpha-CTD) region spans residues 267–355 (YDPILLRKVD…ELARQHTDED (89 aa)).

The protein belongs to the RNA polymerase alpha chain family. As to quaternary structure, homodimer. The RNAP catalytic core consists of 2 alpha, 1 beta, 1 beta' and 1 omega subunit. When a sigma factor is associated with the core the holoenzyme is formed, which can initiate transcription.

It carries out the reaction RNA(n) + a ribonucleoside 5'-triphosphate = RNA(n+1) + diphosphate. Its function is as follows. DNA-dependent RNA polymerase catalyzes the transcription of DNA into RNA using the four ribonucleoside triphosphates as substrates. This Wolbachia sp. subsp. Brugia malayi (strain TRS) protein is DNA-directed RNA polymerase subunit alpha.